The primary structure comprises 258 residues: Imidazole glycerol phosphate synthase subunit HisF (258 aa).

Active-site residues include aspartate 11 and aspartate 130.

Belongs to the HisA/HisF family. As to quaternary structure, heterodimer of HisH and HisF.

It is found in the cytoplasm. The enzyme catalyses 5-[(5-phospho-1-deoxy-D-ribulos-1-ylimino)methylamino]-1-(5-phospho-beta-D-ribosyl)imidazole-4-carboxamide + L-glutamine = D-erythro-1-(imidazol-4-yl)glycerol 3-phosphate + 5-amino-1-(5-phospho-beta-D-ribosyl)imidazole-4-carboxamide + L-glutamate + H(+). Its pathway is amino-acid biosynthesis; L-histidine biosynthesis; L-histidine from 5-phospho-alpha-D-ribose 1-diphosphate: step 5/9. Functionally, IGPS catalyzes the conversion of PRFAR and glutamine to IGP, AICAR and glutamate. The HisF subunit catalyzes the cyclization activity that produces IGP and AICAR from PRFAR using the ammonia provided by the HisH subunit. In Edwardsiella ictaluri (strain 93-146), this protein is Imidazole glycerol phosphate synthase subunit HisF.